Consider the following 134-residue polypeptide: Psoriasis susceptibility 1 candidate gene 2 protein homolog (134 aa).

A signal peptide spans 1-21; the sequence is MLTWKLLGLLVLCLCAGGISG. The interval 18–134 is disordered; sequence GISGNGDPSP…DLDPPQEEYR (117 aa). 2 stretches are compositionally biased toward pro residues: residues 39 to 67 and 81 to 98; these read PPLP…PPGS and PPKP…PDDP. Positions 122–134 are enriched in acidic residues; the sequence is EEPDLDPPQEEYR.

Its subcellular location is the secreted. In Mus musculus (Mouse), this protein is Psoriasis susceptibility 1 candidate gene 2 protein homolog (Psors1c2).